The sequence spans 388 residues: Leucine aminopeptidase 1 (388 aa).

A signal peptide spans 1 to 19 (MRVLAAIALGATGLRGALA). Positions 20 to 88 (AVVPQEVLGT…YPTLNSASYV (69 aa)) are excised as a propeptide. Asn106 and Asn180 each carry an N-linked (GlcNAc...) asparagine glycan. The Zn(2+) site is built by His188 and Asp207. N-linked (GlcNAc...) asparagine glycosylation occurs at Asn232. The Zn(2+) site is built by Glu246 and Asp273. A disulfide bond links Cys322 and Cys326. A Zn(2+)-binding site is contributed by His355.

It belongs to the peptidase M28 family. M28E subfamily. In terms of assembly, monomer. Zn(2+) is required as a cofactor.

The protein localises to the secreted. Its function is as follows. Extracellular aminopeptidase that allows assimilation of proteinaceous substrates. In Aspergillus clavatus (strain ATCC 1007 / CBS 513.65 / DSM 816 / NCTC 3887 / NRRL 1 / QM 1276 / 107), this protein is Leucine aminopeptidase 1 (lap1).